The following is a 525-amino-acid chain: DNA polymerase epsilon subunit 2 (525 aa).

The protein belongs to the DNA polymerase epsilon subunit B family. As to quaternary structure, component of the epsilon DNA polymerase complex consisting of four subunits: the catalytic subunit PolE1/DNApol-epsilon255 and the accessory subunits PolE2/DNApol-epsilon58, Chrac-14/DNApolE3 and PolE4.

The protein resides in the nucleus. Functionally, accessory component of the DNA polymerase epsilon complex. Participates in DNA repair and in chromosomal DNA replication. Has a role in the entrance and progression through S phase. Has a role in endoreplication. Essential for viability and tissue development. This Drosophila melanogaster (Fruit fly) protein is DNA polymerase epsilon subunit 2.